The following is a 63-amino-acid chain: Metallothionein-2 (63 aa).

Positions 1-30 (MDPQDCTCAAGDSCSCAGSCKCKNCRCQSC) are beta. A divalent metal cation is bound by residues Cys-6, Cys-8, Cys-14, Cys-16, Cys-20, Cys-22, Cys-25, Cys-27, Cys-30, Cys-34, Cys-35, Cys-37, Cys-38, Cys-42, Cys-45, Cys-49, Cys-51, Cys-59, Cys-61, and Cys-62. The tract at residues 31 to 63 (RKSCCSCCPASCSNCAKGCVCKEPSSSKCSCCH) is alpha.

The protein belongs to the metallothionein superfamily. Type 1 family.

In terms of biological role, metallothioneins have a high content of cysteine residues that bind various heavy metals. The protein is Metallothionein-2 of Columba livia (Rock dove).